A 430-amino-acid polypeptide reads, in one-letter code: 3-oxo-tetronate kinase (430 aa).

Residues Ser-268, 366-369 (GGET), and Gly-410 contribute to the ATP site.

The protein belongs to the four-carbon acid sugar kinase family.

It carries out the reaction 3-dehydro-L-erythronate + ATP = 3-dehydro-4-O-phospho-L-erythronate + ADP + H(+). It catalyses the reaction 3-dehydro-D-erythronate + ATP = 3-dehydro-4-O-phospho-D-erythronate + ADP + H(+). Its function is as follows. Catalyzes the ATP-dependent phosphorylation of 3-oxo-tetronate to 3-oxo-tetronate 4-phosphate. This Pseudomonas fluorescens (strain ATCC BAA-477 / NRRL B-23932 / Pf-5) protein is 3-oxo-tetronate kinase.